A 441-amino-acid chain; its full sequence is Putative T-box protein 32 (441 aa).

Positions 18 to 199 (NVIGSSRTSD…TGPSAKKTPE (182 aa)) form a DNA-binding region, T-box. A disordered region spans residues 268 to 289 (SLSSPAALQQDSTVSSDNDFDD). The span at 273–284 (AALQQDSTVSSD) shows a compositional bias: polar residues.

It is found in the nucleus. The sequence is that of Putative T-box protein 32 (tbx-32) from Caenorhabditis elegans.